We begin with the raw amino-acid sequence, 53 residues long: Large ribosomal subunit protein bL33A (53 aa).

The protein belongs to the bacterial ribosomal protein bL33 family.

The polypeptide is Large ribosomal subunit protein bL33A (rpmG1) (Mycoplasma genitalium (strain ATCC 33530 / DSM 19775 / NCTC 10195 / G37) (Mycoplasmoides genitalium)).